We begin with the raw amino-acid sequence, 308 residues long: F-actin-capping protein subunit alpha (308 aa).

It belongs to the F-actin-capping protein alpha subunit family. In terms of assembly, component of the F-actin capping complex, composed of a heterodimer of an alpha and a beta subunit.

In terms of biological role, F-actin-capping proteins bind in a Ca(2+)-independent manner to the fast growing ends of actin filaments (barbed end) thereby blocking the exchange of subunits at these ends. Unlike other capping proteins (such as gelsolin and severin), these proteins do not sever actin filaments. The polypeptide is F-actin-capping protein subunit alpha (Arabidopsis thaliana (Mouse-ear cress)).